Reading from the N-terminus, the 219-residue chain is Casparian strip membrane protein 3 (219 aa).

Residues 1-43 (MDPGREDEVPLAATSPESRRTRSNGRGKATVGDAPPPAETVVS) form a disordered region. Topologically, residues 1 to 57 (MDPGREDEVPLAATSPESRRTRSNGRGKATVGDAPPPAETVVSTKAAPLPTGGWKKG) are cytoplasmic. A helical transmembrane segment spans residues 58 to 78 (IAILDFILRLGAIGAAMGASI). Topologically, residues 79-108 (LMGTNEQILPFFTQFLQFHAQWDDFPVFKL) are extracellular. Residues 109-129 (FVVLNALAGGFLILSLPLSIV) traverse the membrane as a helical segment. Residues 130–147 (CIVRPLAVGPRFLLLITD) lie on the Cytoplasmic side of the membrane. A helical transmembrane segment spans residues 148 to 168 (LVNMATVIAAASAAAAIVYVA). Residues 169–193 (HNGSQDANWIAICQQFTDFCQGTSE) are Extracellular-facing. Asn-170 carries an N-linked (GlcNAc...) asparagine glycan. A helical transmembrane segment spans residues 194–214 (AVVVSFVAAVFLVCLIVVSTL). At 215-219 (ALKRT) the chain is on the cytoplasmic side.

The protein belongs to the Casparian strip membrane proteins (CASP) family. In terms of assembly, homodimer and heterodimers.

It localises to the cell membrane. Regulates membrane-cell wall junctions and localized cell wall deposition. Required for establishment of the Casparian strip membrane domain (CSD) and the subsequent formation of Casparian strips, a cell wall modification of the root endodermis that determines an apoplastic barrier between the intraorganismal apoplasm and the extraorganismal apoplasm and prevents lateral diffusion. In Lotus japonicus (Lotus corniculatus var. japonicus), this protein is Casparian strip membrane protein 3.